The following is a 428-amino-acid chain: GTPase Obg (428 aa).

The 158-residue stretch at 1-158 folds into the Obg domain; sequence MFIDKAKVFI…LSIVLELKLL (158 aa). The 173-residue stretch at 159 to 331 folds into the OBG-type G domain; that stretch reads ADVGLLGFPN…VIKEAARMLK (173 aa). Residues 165–172, 190–194, 212–215, 282–285, and 312–314 each bind GTP; these read GFPNVGKS, FTTLK, DIPG, NKSD, and SAA. Serine 172 and threonine 192 together coordinate Mg(2+). In terms of domain architecture, OCT spans 345 to 428; that stretch reads MYIPEEKRFT…LNDFEFEYLL (84 aa).

Belongs to the TRAFAC class OBG-HflX-like GTPase superfamily. OBG GTPase family. In terms of assembly, monomer. It depends on Mg(2+) as a cofactor.

It localises to the cytoplasm. An essential GTPase which binds GTP, GDP and possibly (p)ppGpp with moderate affinity, with high nucleotide exchange rates and a fairly low GTP hydrolysis rate. Plays a role in control of the cell cycle, stress response, ribosome biogenesis and in those bacteria that undergo differentiation, in morphogenesis control. This Clostridium botulinum (strain Eklund 17B / Type B) protein is GTPase Obg.